A 224-amino-acid chain; its full sequence is UPF0758 protein VSAL_I0192 (224 aa).

The region spanning 102–224 (ALTSPEHTKR…IVSFAERGWI (123 aa)) is the MPN domain. Zn(2+)-binding residues include His-173, His-175, and Asp-186. The short motif at 173–186 (HNHPSGVAEPSQAD) is the JAMM motif element.

Belongs to the UPF0758 family.

The polypeptide is UPF0758 protein VSAL_I0192 (Aliivibrio salmonicida (strain LFI1238) (Vibrio salmonicida (strain LFI1238))).